The chain runs to 932 residues: Alanine--tRNA ligase, mitochondrial (932 aa).

A disordered region spans residues 458 to 480 (SRLTWNTSSSSSDQTTQQTTQLP). Positions 464-478 (TSSSSSDQTTQQTTQ) are enriched in low complexity. Zn(2+)-binding residues include histidine 610, histidine 614, cysteine 713, and histidine 717.

It belongs to the class-II aminoacyl-tRNA synthetase family. As to quaternary structure, monomer. It depends on Zn(2+) as a cofactor.

The protein localises to the mitochondrion. It carries out the reaction tRNA(Ala) + L-alanine + ATP = L-alanyl-tRNA(Ala) + AMP + diphosphate. In terms of biological role, catalyzes the attachment of alanine to tRNA(Ala) in a two-step reaction: alanine is first activated by ATP to form Ala-AMP and then transferred to the acceptor end of tRNA(Ala). Also edits incorrectly charged tRNA(Ala) via its editing domain. In Dictyostelium discoideum (Social amoeba), this protein is Alanine--tRNA ligase, mitochondrial (malaS).